We begin with the raw amino-acid sequence, 213 residues long: Large ribosomal subunit protein uL1 (213 aa).

It belongs to the universal ribosomal protein uL1 family. As to quaternary structure, part of the 50S ribosomal subunit.

Binds directly to 23S rRNA. Probably involved in E site tRNA release. Functionally, protein L1 is also a translational repressor protein, it controls the translation of its operon by binding to its mRNA. The protein is Large ribosomal subunit protein uL1 of Methanosarcina acetivorans (strain ATCC 35395 / DSM 2834 / JCM 12185 / C2A).